The primary structure comprises 68 residues: Large ribosomal subunit protein bL32 (68 aa).

The disordered stretch occupies residues 1–25; sequence MAVPQNKITKSRRGQRRSHDALVAG.

The protein belongs to the bacterial ribosomal protein bL32 family.

This chain is Large ribosomal subunit protein bL32, found in Dinoroseobacter shibae (strain DSM 16493 / NCIMB 14021 / DFL 12).